A 402-amino-acid polypeptide reads, in one-letter code: Putative epoxide hydrolase AFT8 (402 aa).

It belongs to the peptidase S33 family.

It participates in mycotoxin biosynthesis. Its function is as follows. Putative epoxide hydrolase; part of the gene clusters that mediate the biosynthesis of the host-selective toxins (HSTs) AF-toxins responsible for Alternaria black spot of strawberry disease by the strawberry pathotype. AF-toxin I and III are valine derivatives of 2,3-dyhydroxy-isovaleric acid and 2-hydroxy-isovaleric acid respectively, while AF II is an isoleucine derivative of 2-hydroxy-valeric acid. These derivatives are bound to a 9,10-epoxy-8-hydroxy-9-methyl-decatrienoic acid (EDA) moiety. On cellular level, AF-toxins affect plasma membrane of susceptible cells and cause a sudden increase in loss of K(+) after a few minutes of toxin treatment. The aldo-keto reductase AFTS1 catalyzes the conversion of 2-keto-isovaleric acid (2-KIV) to 2-hydroxy-isovaleric acid (2-HIV) by reduction of its ketone to an alcohol. The acyl-CoA ligase AFT1, the hydrolase AFT2 and the enoyl-CoA hydratases AFT3 and AFT6, but also the polyketide synthase AFT9, the acyl-CoA dehydrogenase AFT10, the cytochrome P450 monooxygenase AFT11 and the oxidoreductase AFT12 are all involved in the biosynthesis of the AK-, AF- and ACT-toxin common EDA structural moiety. The exact function of each enzyme, and of additional enzymes identified within the AF-toxin clusters have still to be determined. The chain is Putative epoxide hydrolase AFT8 from Alternaria alternata (Alternaria rot fungus).